A 628-amino-acid polypeptide reads, in one-letter code: tRNA (carboxymethyluridine(34)-5-O)-methyltransferase alkbh8 (628 aa).

One can recognise an RRM domain in the interval 43 to 123; the sequence is QSLVVANGGL…ITLYLSFVEK (81 aa). The 118-residue stretch at 218-335 folds into the Fe2OG dioxygenase domain; the sequence is DPDQLTINQY…RTSFTFRKVR (118 aa). 225–227 is a binding site for 2-oxoglutarate; sequence NQY. Residues H236 and D238 each contribute to the Fe cation site. H240 contacts Zn(2+). A Fe cation-binding site is contributed by H290. 2-oxoglutarate-binding residues include R326 and R332. Zn(2+) is bound by residues C339, C341, and C347. A methyltransferase domain region spans residues 410–628; that stretch reads ADVGCGNGKY…GNWCVILEKL (219 aa). The tract at residues 563–582 is disordered; that stretch reads PTNKSKVTPENKEQNEKEHG. Residues 569 to 582 show a composition bias toward basic and acidic residues; that stretch reads VTPENKEQNEKEHG.

This sequence belongs to the alkB family. Fe(2+) is required as a cofactor.

It localises to the cytoplasm. The protein localises to the nucleus. It carries out the reaction 5-(carboxymethyl)uridine(34) in tRNA + S-adenosyl-L-methionine = 5-(2-methoxy-2-oxoethyl)uridine(34) in tRNA + S-adenosyl-L-homocysteine. Functionally, catalyzes the methylation of 5-carboxymethyl uridine to 5-methylcarboxymethyl uridine at the wobble position of the anticodon loop in tRNA via its methyltransferase domain. Catalyzes the last step in the formation of 5-methylcarboxymethyl uridine at the wobble position of the anticodon loop in target tRNA. Has a preference for tRNA(Arg) and tRNA(Glu), and does not bind tRNA(Lys). Binds tRNA and catalyzes the iron and alpha-ketoglutarate dependent hydroxylation of 5-methylcarboxymethyl uridine at the wobble position of the anticodon loop in tRNA via its dioxygenase domain, giving rise to 5-(S)-methoxycarbonylhydroxymethyluridine; has a preference for tRNA(Gly). Required for normal survival after DNA damage. May inhibit apoptosis and promote cell survival and angiogenesis. This is tRNA (carboxymethyluridine(34)-5-O)-methyltransferase alkbh8 (alkbh8) from Xenopus tropicalis (Western clawed frog).